The chain runs to 97 residues: MAGLIRVTPEELRAMAKQYGVESQEVLNQVDRLNRMISDLKSMWEGASSEAFADQYEQLKPSFIKMSDLLQDVNQQLDQTANTLESTDQDIANQIRG.

The stretch at 21 to 94 (VESQEVLNQV…ESTDQDIANQ (74 aa)) forms a coiled coil.

Belongs to the WXG100 family. sagEsxA-like subfamily. In terms of assembly, homodimer.

It localises to the secreted. Functionally, required to deliver LXG toxins to target cells. The protein is Protein YukE (yukE) of Bacillus subtilis (strain 168).